A 596-amino-acid chain; its full sequence is Proteasome-associated ATPase (596 aa).

Positions 12–94 (SRWERETQDL…KEEIDRLAQP (83 aa)) form a coiled coil. 280 to 285 (GCGKTL) provides a ligand contact to ATP. Positions 595-596 (YL) are docks into pockets in the proteasome alpha-ring.

The protein belongs to the AAA ATPase family. Homohexamer. Assembles into a hexameric ring structure that caps the 20S proteasome core. Strongly interacts with the prokaryotic ubiquitin-like protein Pup through a hydrophobic interface; the interacting region of ARC lies in its N-terminal coiled-coil domain. There is one Pup binding site per ARC hexamer ring. Upon ATP-binding, the C-terminus of ARC interacts with the alpha-rings of the proteasome core, possibly by binding to the intersubunit pockets.

It functions in the pathway protein degradation; proteasomal Pup-dependent pathway. Its function is as follows. ATPase which is responsible for recognizing, binding, unfolding and translocation of pupylated proteins into the bacterial 20S proteasome core particle. May be essential for opening the gate of the 20S proteasome via an interaction with its C-terminus, thereby allowing substrate entry and access to the site of proteolysis. Thus, the C-termini of the proteasomal ATPase may function like a 'key in a lock' to induce gate opening and therefore regulate proteolysis. This is Proteasome-associated ATPase from Stackebrandtia nassauensis (strain DSM 44728 / CIP 108903 / NRRL B-16338 / NBRC 102104 / LLR-40K-21).